A 1036-amino-acid chain; its full sequence is Beta-galactosidase (1036 aa).

Asn-97 and Asp-197 together coordinate substrate. Na(+) is bound at residue Asp-197. Residues Glu-411, His-413, and Glu-456 each coordinate Mg(2+). Residues Glu-456 and 532-535 (EYAH) each bind substrate. Glu-456 functions as the Proton donor in the catalytic mechanism. Glu-532 functions as the Nucleophile in the catalytic mechanism. Asn-592 is a Mg(2+) binding site. Residues Phe-596 and Asp-599 each coordinate Na(+). Positions 599 and 1006 each coordinate substrate.

It belongs to the glycosyl hydrolase 2 family. Homotetramer. Mg(2+) serves as cofactor. It depends on Na(+) as a cofactor.

It carries out the reaction Hydrolysis of terminal non-reducing beta-D-galactose residues in beta-D-galactosides.. This Leuconostoc mesenteroides subsp. mesenteroides (strain ATCC 8293 / DSM 20343 / BCRC 11652 / CCM 1803 / JCM 6124 / NCDO 523 / NBRC 100496 / NCIMB 8023 / NCTC 12954 / NRRL B-1118 / 37Y) protein is Beta-galactosidase.